Reading from the N-terminus, the 553-residue chain is Urocanate hydratase (553 aa).

NAD(+) contacts are provided by residues 51 to 52 (GG), Gln-129, 175 to 177 (GMG), Glu-195, Arg-200, 241 to 242 (NA), 262 to 266 (QTSAH), 272 to 273 (YL), and Tyr-321. Cys-409 is a catalytic residue. Gly-491 is an NAD(+) binding site.

It belongs to the urocanase family. NAD(+) is required as a cofactor.

It is found in the cytoplasm. It carries out the reaction 4-imidazolone-5-propanoate = trans-urocanate + H2O. It functions in the pathway amino-acid degradation; L-histidine degradation into L-glutamate; N-formimidoyl-L-glutamate from L-histidine: step 2/3. Its function is as follows. Catalyzes the conversion of urocanate to 4-imidazolone-5-propionate. In Sphingopyxis alaskensis (strain DSM 13593 / LMG 18877 / RB2256) (Sphingomonas alaskensis), this protein is Urocanate hydratase.